Reading from the N-terminus, the 271-residue chain is Putative pyruvate, phosphate dikinase regulatory protein (271 aa).

153–160 contacts ADP; that stretch reads GVSRTSKT.

Belongs to the pyruvate, phosphate/water dikinase regulatory protein family. PDRP subfamily.

It carries out the reaction N(tele)-phospho-L-histidyl/L-threonyl-[pyruvate, phosphate dikinase] + ADP = N(tele)-phospho-L-histidyl/O-phospho-L-threonyl-[pyruvate, phosphate dikinase] + AMP + H(+). The enzyme catalyses N(tele)-phospho-L-histidyl/O-phospho-L-threonyl-[pyruvate, phosphate dikinase] + phosphate + H(+) = N(tele)-phospho-L-histidyl/L-threonyl-[pyruvate, phosphate dikinase] + diphosphate. Bifunctional serine/threonine kinase and phosphorylase involved in the regulation of the pyruvate, phosphate dikinase (PPDK) by catalyzing its phosphorylation/dephosphorylation. The protein is Putative pyruvate, phosphate dikinase regulatory protein of Shouchella clausii (strain KSM-K16) (Alkalihalobacillus clausii).